Here is a 263-residue protein sequence, read N- to C-terminus: MGQKVNSNGLRFGINKNWQSRWVAKTNQQTGDWIVQDEKIRNYLFKKFHSAFISNVDIERTQTSIRVFIYASQPGIILGKEAANIKVILLAINKIVGRHIKVDVDVLEVGNPSLSAKIVARELADAIENRTPLRTAMRQALKRVLKAGAKGIKVLVSGRLNGVEIARDKMYIEGNVTLSTLRTDIDYALEEAQMSYGVIGVKVWINRGEIFGKDFYKKQAHIVKPKGSEANHQRRNSNKSKDYRDNKNKQFNKNHQNQQPAKE.

The 69-residue stretch at 40–108 (IRNYLFKKFH…HIKVDVDVLE (69 aa)) folds into the KH type-2 domain. The interval 224–263 (KPKGSEANHQRRNSNKSKDYRDNKNKQFNKNHQNQQPAKE) is disordered. Basic and acidic residues predominate over residues 239–248 (KSKDYRDNKN). Residues 249–263 (KQFNKNHQNQQPAKE) are compositionally biased toward low complexity.

This sequence belongs to the universal ribosomal protein uS3 family. Part of the 30S ribosomal subunit. Forms a tight complex with proteins S10 and S14.

Its function is as follows. Binds the lower part of the 30S subunit head. Binds mRNA in the 70S ribosome, positioning it for translation. The polypeptide is Small ribosomal subunit protein uS3 (Mycoplasmoides gallisepticum (strain R(low / passage 15 / clone 2)) (Mycoplasma gallisepticum)).